The primary structure comprises 362 residues: Chorismate synthase (362 aa).

2 residues coordinate NADP(+): arginine 48 and arginine 54. Residues 131 to 133 (RSS), 243 to 244 (NA), glycine 287, 302 to 306 (KPTSS), and arginine 328 contribute to the FMN site.

It belongs to the chorismate synthase family. In terms of assembly, homotetramer. FMNH2 serves as cofactor.

It carries out the reaction 5-O-(1-carboxyvinyl)-3-phosphoshikimate = chorismate + phosphate. It participates in metabolic intermediate biosynthesis; chorismate biosynthesis; chorismate from D-erythrose 4-phosphate and phosphoenolpyruvate: step 7/7. Catalyzes the anti-1,4-elimination of the C-3 phosphate and the C-6 proR hydrogen from 5-enolpyruvylshikimate-3-phosphate (EPSP) to yield chorismate, which is the branch point compound that serves as the starting substrate for the three terminal pathways of aromatic amino acid biosynthesis. This reaction introduces a second double bond into the aromatic ring system. This chain is Chorismate synthase, found in Rhodopseudomonas palustris (strain TIE-1).